Here is a 130-residue protein sequence, read N- to C-terminus: Guanyl-specific ribonuclease T1 (130 aa).

The N-terminal stretch at 1-26 is a signal peptide; the sequence is MMYSKLLTLTTLLLPTALALPSLVER. Cystine bridges form between cysteine 28-cysteine 36 and cysteine 32-cysteine 129. Residue histidine 66 is part of the active site. Glutamate 84 functions as the Proton acceptor in the catalytic mechanism. Histidine 118 (proton donor) is an active-site residue.

Belongs to the ribonuclease N1/T1 family. In terms of assembly, monomer.

It carries out the reaction [RNA] containing guanosine + H2O = an [RNA fragment]-3'-guanosine-3'-phosphate + a 5'-hydroxy-ribonucleotide-3'-[RNA fragment].. This Aspergillus oryzae (strain ATCC 42149 / RIB 40) (Yellow koji mold) protein is Guanyl-specific ribonuclease T1 (rntA).